A 278-amino-acid chain; its full sequence is Phosphatidylglycerol--prolipoprotein diacylglyceryl transferase (278 aa).

4 helical membrane passes run 19-39 (WYGILMATGVLVATLMAINEG), 49-69 (FIDFLLWAVPIGFIGARIYYV), 83-103 (IIAIWNGGIAIYGGLIAGLIV), and 112-132 (MLPPFLMLDIIAPGVMAAQVI). R134 contacts a 1,2-diacyl-sn-glycero-3-phospho-(1'-sn-glycerol). 3 helical membrane passes run 174-194 (QPTYLYESALNLVGLILILSL), 204-224 (GEVFFSYVIWYAAVRFFVEGM), and 235-255 (IRVSQALSLILFFGAIILWVY).

Belongs to the Lgt family.

Its subcellular location is the cell membrane. It catalyses the reaction L-cysteinyl-[prolipoprotein] + a 1,2-diacyl-sn-glycero-3-phospho-(1'-sn-glycerol) = an S-1,2-diacyl-sn-glyceryl-L-cysteinyl-[prolipoprotein] + sn-glycerol 1-phosphate + H(+). The protein operates within protein modification; lipoprotein biosynthesis (diacylglyceryl transfer). Functionally, catalyzes the transfer of the diacylglyceryl group from phosphatidylglycerol to the sulfhydryl group of the N-terminal cysteine of a prolipoprotein, the first step in the formation of mature lipoproteins. The polypeptide is Phosphatidylglycerol--prolipoprotein diacylglyceryl transferase (Lactobacillus gasseri (strain ATCC 33323 / DSM 20243 / BCRC 14619 / CIP 102991 / JCM 1131 / KCTC 3163 / NCIMB 11718 / NCTC 13722 / AM63)).